The sequence spans 515 residues: Maturase K (515 aa).

It belongs to the intron maturase 2 family. MatK subfamily.

The protein localises to the plastid. The protein resides in the chloroplast. Usually encoded in the trnK tRNA gene intron. Probably assists in splicing its own and other chloroplast group II introns. The polypeptide is Maturase K (Pinus roxburghii (Chir pine)).